Here is a 406-residue protein sequence, read N- to C-terminus: Phosphoglycerate kinase (406 aa).

Substrate contacts are provided by residues 23 to 25, arginine 38, 61 to 64, arginine 117, and arginine 157; these read DIN and HQGR. Residues glutamate 331 and 357–360 each bind ATP; that span reads GGHI.

It belongs to the phosphoglycerate kinase family. In terms of assembly, monomer.

Its subcellular location is the cytoplasm. The enzyme catalyses (2R)-3-phosphoglycerate + ATP = (2R)-3-phospho-glyceroyl phosphate + ADP. It functions in the pathway carbohydrate degradation; glycolysis; pyruvate from D-glyceraldehyde 3-phosphate: step 2/5. The chain is Phosphoglycerate kinase from Methanopyrus kandleri (strain AV19 / DSM 6324 / JCM 9639 / NBRC 100938).